The sequence spans 509 residues: ATP synthase subunit alpha (509 aa).

169–176 (GDRKTGKT) provides a ligand contact to ATP.

It belongs to the ATPase alpha/beta chains family. In terms of assembly, F-type ATPases have 2 components, CF(1) - the catalytic core - and CF(0) - the membrane proton channel. CF(1) has five subunits: alpha(3), beta(3), gamma(1), delta(1), epsilon(1). CF(0) has three main subunits: a(1), b(2) and c(9-12). The alpha and beta chains form an alternating ring which encloses part of the gamma chain. CF(1) is attached to CF(0) by a central stalk formed by the gamma and epsilon chains, while a peripheral stalk is formed by the delta and b chains.

The protein localises to the cell membrane. The enzyme catalyses ATP + H2O + 4 H(+)(in) = ADP + phosphate + 5 H(+)(out). Produces ATP from ADP in the presence of a proton gradient across the membrane. The alpha chain is a regulatory subunit. In Lacticaseibacillus casei (strain BL23) (Lactobacillus casei), this protein is ATP synthase subunit alpha.